Reading from the N-terminus, the 159-residue chain is SsrA-binding protein (159 aa).

Residues 133 to 159 (KKLHDKRETSKERDWNRQKNRLLKERG) are disordered. The span at 137 to 159 (DKRETSKERDWNRQKNRLLKERG) shows a compositional bias: basic and acidic residues.

Belongs to the SmpB family.

Its subcellular location is the cytoplasm. Its function is as follows. Required for rescue of stalled ribosomes mediated by trans-translation. Binds to transfer-messenger RNA (tmRNA), required for stable association of tmRNA with ribosomes. tmRNA and SmpB together mimic tRNA shape, replacing the anticodon stem-loop with SmpB. tmRNA is encoded by the ssrA gene; the 2 termini fold to resemble tRNA(Ala) and it encodes a 'tag peptide', a short internal open reading frame. During trans-translation Ala-aminoacylated tmRNA acts like a tRNA, entering the A-site of stalled ribosomes, displacing the stalled mRNA. The ribosome then switches to translate the ORF on the tmRNA; the nascent peptide is terminated with the 'tag peptide' encoded by the tmRNA and targeted for degradation. The ribosome is freed to recommence translation, which seems to be the essential function of trans-translation. This is SsrA-binding protein from Sinorhizobium medicae (strain WSM419) (Ensifer medicae).